The primary structure comprises 388 residues: Succinate--CoA ligase [ADP-forming] subunit beta (388 aa).

The region spanning 9–244 is the ATP-grasp domain; the sequence is KQLFARYGLP…PSQEDSREAH (236 aa). Residues Lys-46, 53-55, Glu-99, Thr-102, and Glu-107 contribute to the ATP site; that span reads GRG. Mg(2+) contacts are provided by Asn-199 and Asp-213. Substrate contacts are provided by residues Asn-264 and 321-323; that span reads GIV.

It belongs to the succinate/malate CoA ligase beta subunit family. Heterotetramer of two alpha and two beta subunits. Requires Mg(2+) as cofactor.

It catalyses the reaction succinate + ATP + CoA = succinyl-CoA + ADP + phosphate. The enzyme catalyses GTP + succinate + CoA = succinyl-CoA + GDP + phosphate. The protein operates within carbohydrate metabolism; tricarboxylic acid cycle; succinate from succinyl-CoA (ligase route): step 1/1. Succinyl-CoA synthetase functions in the citric acid cycle (TCA), coupling the hydrolysis of succinyl-CoA to the synthesis of either ATP or GTP and thus represents the only step of substrate-level phosphorylation in the TCA. The beta subunit provides nucleotide specificity of the enzyme and binds the substrate succinate, while the binding sites for coenzyme A and phosphate are found in the alpha subunit. The chain is Succinate--CoA ligase [ADP-forming] subunit beta from Erwinia tasmaniensis (strain DSM 17950 / CFBP 7177 / CIP 109463 / NCPPB 4357 / Et1/99).